A 2839-amino-acid polypeptide reads, in one-letter code: Neurofibromin (2839 aa).

Position 2 is an N-acetylalanine (Ala-2). Ser-864 and Ser-876 each carry phosphoserine. The 232-residue stretch at 1251–1482 (HLLYQLLWNM…DAARRFFLDI (232 aa)) folds into the Ras-GAP domain. Residues 1580–1738 (EKEEFKALKT…ATLALEEDLK (159 aa)) form the CRAL-TRIO domain. The lipid binding stretch occupies residues 1580–1837 (EKEEFKALKT…RTRWELSQPD (258 aa)). 2 positions are modified to phosphoserine: Ser-2188 and Ser-2467. Position 2514 is a phosphothreonine (Thr-2514). Phosphoserine is present on residues Ser-2515, Ser-2521, Ser-2523, and Ser-2543. The short motif at 2555-2571 (KRQEMESGITTPPKMRR) is the Bipartite nuclear localization signal element. Thr-2565 is subject to Phosphothreonine. A phosphoserine mark is found at Ser-2597, Ser-2802, and Ser-2817. The interval 2787–2839 (TSQHSPGIDKENVELSPTTGHCNSGRTRHGSASQVQKQRSAGSFKRNSIKKIV) is disordered. Over residues 2801–2827 (LSPTTGHCNSGRTRHGSASQVQKQRSA) the composition is skewed to polar residues.

In terms of assembly, interacts with HTR6. Interacts with SPRED2. Post-translationally, ubiquitinated by RNF7/RBX2, leading to its degradation. In terms of tissue distribution, detected in brain, peripheral nerve, lung, colon and muscle.

It is found in the nucleus. The protein localises to the nucleolus. Its subcellular location is the cell membrane. Stimulates the GTPase activity of Ras. NF1 shows greater affinity for Ras GAP, but lower specific activity. May be a regulator of Ras activity. The sequence is that of Neurofibromin (NF1) from Homo sapiens (Human).